The sequence spans 238 residues: tRNA (guanine-N(1)-)-methyltransferase (238 aa).

S-adenosyl-L-methionine-binding positions include Gly-109 and 129-134 (IGDFVL).

The protein belongs to the RNA methyltransferase TrmD family. Homodimer.

It is found in the cytoplasm. It catalyses the reaction guanosine(37) in tRNA + S-adenosyl-L-methionine = N(1)-methylguanosine(37) in tRNA + S-adenosyl-L-homocysteine + H(+). In terms of biological role, specifically methylates guanosine-37 in various tRNAs. In Exiguobacterium sp. (strain ATCC BAA-1283 / AT1b), this protein is tRNA (guanine-N(1)-)-methyltransferase.